The primary structure comprises 970 residues: Sodium/calcium exchanger 1 (970 aa).

The first 32 residues, 1–32 (MLRLSLPPNVSMGFRLVALVALLFSHVDHITA), serve as a signal peptide directing secretion. Residues 33 to 71 (DTEAETGGNETTECTGSYYCKKGVILPIWEPQDPSFGDK) lie on the Extracellular side of the membrane. The N-linked (GlcNAc...) asparagine glycan is linked to N41. Residues 72–92 (IARATVYFVAMVYMFLGVSII) traverse the membrane as a helical segment. Over 93–133 (ADRFMSSIEVITSQEKEITIKKPNGETTKTTVRIWNETVSN) the chain is Cytoplasmic. A helical membrane pass occupies residues 134 to 154 (LTLMALGSSAPEILLSVIEVC). Residues 138-178 (ALGSSAPEILLSVIEVCGHNFTAGDLGPSTIVGSAAFNMFI) form an Alpha-1 repeat. Residues 155–167 (GHNFTAGDLGPST) are Extracellular-facing. Residue N157 is glycosylated (N-linked (GlcNAc...) asparagine). The chain crosses the membrane as a helical span at residues 168–188 (IVGSAAFNMFIIIALCVYVVP). Topologically, residues 189–201 (DGETRKIKHLRVF) are cytoplasmic. Residues 202 to 222 (FVTAAWSIFAYTWLYIILSVS) form a helical membrane-spanning segment. Over 223-228 (SPGVVE) the chain is Extracellular. A helical transmembrane segment spans residues 229–249 (VWEGLLTFFFFPICVVFAWVA). At 250–797 (DRRLLFYKYV…FVPPTEYWNG (548 aa)) the chain is on the cytoplasmic side. The interval 251–270 (RRLLFYKYVYKRYRAGKQRG) is putative calmodulin-binding region. 2 positions are modified to phosphoserine: S282 and S389. 2 Calx-beta domains span residues 393–493 (VNME…VHLS) and 524–624 (ATIT…IEIG). Residues E417, D453, D478, D479, I481, E483, E486, D530, D531, D532, E548, D584, D610, E611, E612, and E715 each contribute to the Ca(2+) site. The helical transmembrane segment at 798–818 (WACFIVSILMIGLLTAFIGDL) threads the bilayer. Residues 819–821 (ASH) lie on the Extracellular side of the membrane. The chain crosses the membrane as a helical span at residues 822–842 (FGCTIGLKDSVTAVVFVALGT). One copy of the Alpha-2 repeat lies at 839 to 875 (ALGTSVPDTFASKVAATQDQYADASIGNVTGSNAVNV). Residues 843–871 (SVPDTFASKVAATQDQYADASIGNVTGSN) lie on the Cytoplasmic side of the membrane. The chain crosses the membrane as a helical span at residues 872 to 892 (AVNVFLGIGVAWSIAAIYHAA). Over 893 to 903 (NGEQFKVSPGT) the chain is Extracellular. A helical membrane pass occupies residues 904 to 924 (LAFSVTLFTIFAFINVGVLLY). At 925 to 941 (RRRPEIGGELGGPRTAK) the chain is on the cytoplasmic side. The chain crosses the membrane as a helical span at residues 942–962 (LLTSSLFVLLWLLYIFFSSLE). Residues 963–970 (AYCHIKGF) are Extracellular-facing.

It belongs to the Ca(2+):cation antiporter (CaCA) (TC 2.A.19) family. SLC8 subfamily. Detected in heart, kidney and brain (at protein level).

The protein resides in the cell membrane. The enzyme catalyses Ca(2+)(in) + 3 Na(+)(out) = Ca(2+)(out) + 3 Na(+)(in). Its activity is regulated as follows. Activated by micromolar levels of Ca(2+). Mediates the exchange of one Ca(2+) ion against three to four Na(+) ions across the cell membrane, and thereby contributes to the regulation of cytoplasmic Ca(2+) levels and Ca(2+)-dependent cellular processes. Contributes to Ca(2+) transport during excitation-contraction coupling in muscle. In a first phase, voltage-gated channels mediate the rapid increase of cytoplasmic Ca(2+) levels due to release of Ca(2+) stores from the endoplasmic reticulum. SLC8A1 mediates the export of Ca(2+) from the cell during the next phase, so that cytoplasmic Ca(2+) levels rapidly return to baseline. Required for normal embryonic heart development and the onset of heart contractions. The protein is Sodium/calcium exchanger 1 (Slc8a1) of Mus musculus (Mouse).